The chain runs to 197 residues: Guanylate kinase (197 aa).

The 186-residue stretch at 6 to 191 (SKLIILSGPS…CVAQIEKIIS (186 aa)) folds into the Guanylate kinase-like domain. Position 13–20 (13–20 (GPSGVGKG)) interacts with ATP.

It belongs to the guanylate kinase family.

It is found in the cytoplasm. The catalysed reaction is GMP + ATP = GDP + ADP. In terms of biological role, essential for recycling GMP and indirectly, cGMP. In Mesomycoplasma hyopneumoniae (strain 232) (Mycoplasma hyopneumoniae), this protein is Guanylate kinase.